The following is a 699-amino-acid chain: Homeobox-leucine zipper protein HDG8 (699 aa).

A disordered region spans residues 1-31; sequence MDNNGGGSSGNEQYTSGDAKQNGKRTCHRHT. Polar residues predominate over residues 10-19; it reads GNEQYTSGDA. The segment covering 22–31 has biased composition (basic residues); it reads NGKRTCHRHT. The homeobox DNA-binding region spans 23 to 82; that stretch reads GKRTCHRHTPQQIQRLEAYFKECPHPDERQRNQLCRELKLEPDQIKFWFQNKRTQSKTQE. Residues 89–149 adopt a coiled-coil conformation; that stretch reads LLRGENETLQ…LKDHRDRISN (61 aa). Positions 204–438 constitute an START domain; sequence AETDMSLLSE…LERMCERMAL (235 aa).

It belongs to the HD-ZIP homeobox family. Class IV subfamily. Interacts with ANT. In terms of tissue distribution, expressed in the embryo at early stage and in the endosperm.

It localises to the nucleus. Its function is as follows. Probable transcription factor. This Arabidopsis thaliana (Mouse-ear cress) protein is Homeobox-leucine zipper protein HDG8.